The sequence spans 379 residues: Cytochrome b (379 aa).

4 helical membrane passes run 33–53 (FGSL…FLAM), 77–98 (WTIR…FIHV), 113–133 (WNIG…GYVL), and 178–198 (FFAL…IHLL). Residues His83 and His97 each contribute to the heme b site. Residues His182 and His196 each coordinate heme b. His201 is an a ubiquinone binding site. 4 helical membrane passes run 226–246 (TKDF…TLFY), 288–308 (LGGV…PFLQ), 320–340 (LSQF…WIGG), and 347–367 (FISI…FIMP).

It belongs to the cytochrome b family. In terms of assembly, the cytochrome bc1 complex contains 11 subunits: 3 respiratory subunits (MT-CYB, CYC1 and UQCRFS1), 2 core proteins (UQCRC1 and UQCRC2) and 6 low-molecular weight proteins (UQCRH/QCR6, UQCRB/QCR7, UQCRQ/QCR8, UQCR10/QCR9, UQCR11/QCR10 and a cleavage product of UQCRFS1). This cytochrome bc1 complex then forms a dimer. It depends on heme b as a cofactor.

The protein resides in the mitochondrion inner membrane. Component of the ubiquinol-cytochrome c reductase complex (complex III or cytochrome b-c1 complex) that is part of the mitochondrial respiratory chain. The b-c1 complex mediates electron transfer from ubiquinol to cytochrome c. Contributes to the generation of a proton gradient across the mitochondrial membrane that is then used for ATP synthesis. The polypeptide is Cytochrome b (MT-CYB) (Lepilemur randrianasoloi (Randrianasoli's sportive lemur)).